The following is a 251-amino-acid chain: Phosphate import ATP-binding protein PstB (251 aa).

The region spanning I5 to I246 is the ABC transporter domain. G37 to S44 provides a ligand contact to ATP.

This sequence belongs to the ABC transporter superfamily. Phosphate importer (TC 3.A.1.7) family. As to quaternary structure, the complex is composed of two ATP-binding proteins (PstB), two transmembrane proteins (PstC and PstA) and a solute-binding protein (PstS).

The protein resides in the cell membrane. The catalysed reaction is phosphate(out) + ATP + H2O = ADP + 2 phosphate(in) + H(+). Its function is as follows. Part of the ABC transporter complex PstSACB involved in phosphate import. Responsible for energy coupling to the transport system. The sequence is that of Phosphate import ATP-binding protein PstB from Dehalococcoides mccartyi (strain CBDB1).